The following is a 1130-amino-acid chain: BTB/POZ domain-containing protein 7 (1130 aa).

The segment covering 1–10 has biased composition (polar residues); it reads MGANASNYPH. The tract at residues 1-24 is disordered; the sequence is MGANASNYPHSCSPRVGGNSQAQQ. A lipid anchor (N-myristoyl glycine) is attached at Gly-2. 2 consecutive BTB domains span residues 142 to 211 and 247 to 341; these read TDVD…GMED and YDVV…DLSV. Positions 413 to 479 constitute a BACK domain; sequence YGSKWVHRQA…WGEHQLMKRI (67 aa). Ser-722 carries the post-translational modification Phosphoserine. Disordered regions lie at residues 898 to 1050 and 1062 to 1130; these read SEAG…PAHV and FGLT…KSAL. 2 stretches are compositionally biased toward basic and acidic residues: residues 923–935 and 996–1005; these read PTLE…RENQ and KKQEDPRREY. Ser-1008 carries the post-translational modification Phosphoserine. Polar residues predominate over residues 1063-1075; that stretch reads GLTSNRPPSHSAC. Basic and acidic residues-rich tracts occupy residues 1080–1090 and 1101–1112; these read LEERSSRRLTD and RNADLERGDSIS.

As to expression, specifically expressed in embryonic epithelia.

The protein localises to the nucleus. Its function is as follows. Acts as a mediator of epithelial dynamics and organ branching by promoting cleft progression. Induced following accumulation of fibronectin in forming clefts, leading to local expression of the cell-scattering SNAIL2 and suppression of E-cadherin levels, thereby altering cell morphology and reducing cell-cell adhesion. This stimulates cell separation at the base of forming clefts by local, dynamic intercellular gap formation and promotes cleft progression. This chain is BTB/POZ domain-containing protein 7 (Btbd7), found in Mus musculus (Mouse).